The primary structure comprises 145 residues: Protein AggB (145 aa).

Residues 1 to 24 form the signal peptide; sequence MLKKSILPMSCGVLVMVMSGLLDA.

The protein to E.coli AfaD.

This is Protein AggB (aggB) from Escherichia coli.